Reading from the N-terminus, the 142-residue chain is Large ribosomal subunit protein uL11 (142 aa).

The protein belongs to the universal ribosomal protein uL11 family. In terms of assembly, part of the ribosomal stalk of the 50S ribosomal subunit. Interacts with L10 and the large rRNA to form the base of the stalk. L10 forms an elongated spine to which L12 dimers bind in a sequential fashion forming a multimeric L10(L12)X complex. Post-translationally, one or more lysine residues are methylated.

Its function is as follows. Forms part of the ribosomal stalk which helps the ribosome interact with GTP-bound translation factors. The polypeptide is Large ribosomal subunit protein uL11 (Klebsiella pneumoniae (strain 342)).